Here is a 500-residue protein sequence, read N- to C-terminus: MKMINQDTICAIATAQGGAIGIIRVSGPKAIEITSRIFTPATGKPLTERAPYTLTFGKICSPKRKINNTLFQQTSEIPQEKSETLQKTSSITSSAEEVIDEVLISLFRAPHSYTGEDSTEIMCHGSSYILQQVIQLLIYNGCRAALPGEYTQRAFLNGKMDLSQAEAVADLIASSSASTHRLAMSQMRGGFSKELSNLRNQLLHFTSLMELELDFSDHEELEFANRDELSSLATHIEQVIARLAHSFSVGNAIKNGIPVAIIGETNAGKSTLLNALLNEEKAIVSDIHGTTRDVIEDTINLQGVTFRFIDTAGIRQTNDTIENLGIERTFQKMDQAYVILWMIDSTDAQRRFEELKADILPHCEGKKMIILFNKSDLLLATQKEELSAIFADMKVEKLFISAKKRENITILEKKLVQAAALPEVNQNDIIITNVRHYEALTRALDSIHRVQEGLQLELSGDLVSEDLRQCIHELSEIVAEGGITSEETLQNIFQNFCIGK.

Residues R24, E120, and K159 each contribute to the (6S)-5-formyl-5,6,7,8-tetrahydrofolate site. The 165-residue stretch at 256–420 (GIPVAIIGET…LEKKLVQAAA (165 aa)) folds into the TrmE-type G domain. Residue N266 coordinates K(+). GTP contacts are provided by residues 266–271 (NAGKST), 285–291 (SDIHGTT), and 310–313 (DTAG). S270 is a binding site for Mg(2+). 3 residues coordinate K(+): S285, I287, and T290. A Mg(2+)-binding site is contributed by T291. Position 500 (K500) interacts with (6S)-5-formyl-5,6,7,8-tetrahydrofolate.

The protein belongs to the TRAFAC class TrmE-Era-EngA-EngB-Septin-like GTPase superfamily. TrmE GTPase family. Homodimer. Heterotetramer of two MnmE and two MnmG subunits. It depends on K(+) as a cofactor.

Its subcellular location is the cytoplasm. In terms of biological role, exhibits a very high intrinsic GTPase hydrolysis rate. Involved in the addition of a carboxymethylaminomethyl (cmnm) group at the wobble position (U34) of certain tRNAs, forming tRNA-cmnm(5)s(2)U34. In Phocaeicola vulgatus (strain ATCC 8482 / DSM 1447 / JCM 5826 / CCUG 4940 / NBRC 14291 / NCTC 11154) (Bacteroides vulgatus), this protein is tRNA modification GTPase MnmE.